A 173-amino-acid polypeptide reads, in one-letter code: Ferric citrate uptake sigma factor FecI (173 aa).

A Polymerase core binding motif is present at residues 40 to 52 (DIAQDTFLRVMVS). The segment at residues 139–158 (YSEIAHKLGVSISSVKKYVA) is a DNA-binding region (H-T-H motif).

The protein belongs to the sigma-70 factor family. ECF subfamily. Interacts with FecR (via cytoplasmic N-terminus).

In terms of biological role, sigma factors are initiation factors that promote the attachment of RNA polymerase to specific initiation sites and are then released. This sigma factor regulates transcriptional activation of the fecABCDE operon which mediates ferric citrate transport. This chain is Ferric citrate uptake sigma factor FecI (fecI), found in Escherichia coli (strain K12).